A 290-amino-acid chain; its full sequence is Pyridoxal kinase PdxY (290 aa).

Residues Ser12 and 47 to 48 (TQ) each bind substrate. ATP is bound by residues Asp114, Glu151, Lys184, and 211 to 214 (RPLL). Asp225 contacts substrate.

This sequence belongs to the pyridoxine kinase family. PdxY subfamily. Homodimer. Mg(2+) is required as a cofactor.

It carries out the reaction pyridoxal + ATP = pyridoxal 5'-phosphate + ADP + H(+). It participates in cofactor metabolism; pyridoxal 5'-phosphate salvage; pyridoxal 5'-phosphate from pyridoxal: step 1/1. In terms of biological role, pyridoxal kinase involved in the salvage pathway of pyridoxal 5'-phosphate (PLP). Catalyzes the phosphorylation of pyridoxal to PLP. The chain is Pyridoxal kinase PdxY from Pseudomonas putida (strain GB-1).